Reading from the N-terminus, the 93-residue chain is Small ribosomal subunit protein uS17 (93 aa).

It belongs to the universal ribosomal protein uS17 family. As to quaternary structure, part of the 30S ribosomal subunit.

Its function is as follows. One of the primary rRNA binding proteins, it binds specifically to the 5'-end of 16S ribosomal RNA. The sequence is that of Small ribosomal subunit protein uS17 from Corynebacterium kroppenstedtii (strain DSM 44385 / JCM 11950 / CIP 105744 / CCUG 35717).